The chain runs to 358 residues: Phosphoserine aminotransferase (358 aa).

Arg-41 is an L-glutamate binding site. Residues 75 to 76 (AS), Trp-100, Thr-148, Asp-167, and Gln-190 contribute to the pyridoxal 5'-phosphate site. At Lys-191 the chain carries N6-(pyridoxal phosphate)lysine. 233–234 (NT) contacts pyridoxal 5'-phosphate.

The protein belongs to the class-V pyridoxal-phosphate-dependent aminotransferase family. SerC subfamily. Homodimer. Pyridoxal 5'-phosphate is required as a cofactor.

The protein resides in the cytoplasm. It carries out the reaction O-phospho-L-serine + 2-oxoglutarate = 3-phosphooxypyruvate + L-glutamate. The catalysed reaction is 4-(phosphooxy)-L-threonine + 2-oxoglutarate = (R)-3-hydroxy-2-oxo-4-phosphooxybutanoate + L-glutamate. It functions in the pathway amino-acid biosynthesis; L-serine biosynthesis; L-serine from 3-phospho-D-glycerate: step 2/3. The protein operates within cofactor biosynthesis; pyridoxine 5'-phosphate biosynthesis; pyridoxine 5'-phosphate from D-erythrose 4-phosphate: step 3/5. Functionally, catalyzes the reversible conversion of 3-phosphohydroxypyruvate to phosphoserine and of 3-hydroxy-2-oxo-4-phosphonooxybutanoate to phosphohydroxythreonine. In Campylobacter jejuni subsp. doylei (strain ATCC BAA-1458 / RM4099 / 269.97), this protein is Phosphoserine aminotransferase.